Reading from the N-terminus, the 569-residue chain is MKYIVVTGGVLSGIGKGIIASSTAMILKSMGLRVTSIKIDPYLNIDAGTMSPFEHGEVFVLDDGGEVDLDLGNYERFLDVNLGKDNNITTGKIYNLVIEKERKGQYLGKTVQVVPHITEEIQNWIERVAHLPVDGDKGTPDVCVIELGGTVGDIESMPFTEALRQFQFRVGVENFCLMHVSLVPVLGVVGEQKTKPSQQSIRELRSLGLSPDFCLCRSTQPLTEETKKKISLFCHVAPDNVIGVHDVSNIYRVPILLNQQNLPNLVLRRLQLNPKVDLSKTSPSESTPYWMASWKGLADRMDKITNESLNPIRIAMVGKYTGLTDAYLSVIKALDHASMAIERKMVIDWVEASNLETQNSSTAEYKKSWEMLRGAHGILVPGGFGDRGIEGMILTANYARTSGKPFLGICLGLQIAVIEYARNVMGWENANSEEFSASGSGKNVVVFMPEVSKTHMGGTMRLGSRDTIFTDVDNKISKLYNVDKVGQAVEERHRHRYEVNPEVVDEIHAKGLHFVGKDTTGVRMEIVELKDHDYYVACQFHPEFKSRPQRPSPPFIGLLNASLERLKKM.

The Glutamine amidotransferase type-1 domain occupies 313-569; the sequence is RIAMVGKYTG…NASLERLKKM (257 aa). The active-site Nucleophile is the C410. Catalysis depends on residues H541 and E543.

This sequence belongs to the CTP synthase family.

The catalysed reaction is UTP + L-glutamine + ATP + H2O = CTP + L-glutamate + ADP + phosphate + 2 H(+). Its pathway is pyrimidine metabolism; CTP biosynthesis via de novo pathway; CTP from UDP: step 2/2. Catalyzes the ATP-dependent amination of UTP to CTP with either L-glutamine or ammonia as the source of nitrogen. The polypeptide is CTP synthase (ctps) (Dictyostelium discoideum (Social amoeba)).